A 341-amino-acid polypeptide reads, in one-letter code: UDP-3-O-(3-hydroxymyristoyl)glucosamine N-acyltransferase (341 aa).

The active-site Proton acceptor is the H239.

It belongs to the transferase hexapeptide repeat family. LpxD subfamily. Homotrimer.

It catalyses the reaction a UDP-3-O-[(3R)-3-hydroxyacyl]-alpha-D-glucosamine + a (3R)-hydroxyacyl-[ACP] = a UDP-2-N,3-O-bis[(3R)-3-hydroxyacyl]-alpha-D-glucosamine + holo-[ACP] + H(+). The enzyme catalyses UDP-3-O-[(3R)-3-hydroxytetradecanoyl]-alpha-D-glucosamine + (3R)-hydroxytetradecanoyl-[ACP] = UDP-2-N,3-O-bis[(3R)-3-hydroxytetradecanoyl]-alpha-D-glucosamine + holo-[ACP] + H(+). It participates in glycolipid biosynthesis; lipid IV(A) biosynthesis; lipid IV(A) from (3R)-3-hydroxytetradecanoyl-[acyl-carrier-protein] and UDP-N-acetyl-alpha-D-glucosamine: step 3/6. Functionally, catalyzes the N-acylation of UDP-3-O-(hydroxytetradecanoyl)glucosamine using 3-hydroxytetradecanoyl-ACP as the acyl donor. Is involved in the biosynthesis of lipid A, a phosphorylated glycolipid that anchors the lipopolysaccharide to the outer membrane of the cell. The polypeptide is UDP-3-O-(3-hydroxymyristoyl)glucosamine N-acyltransferase (Escherichia coli O157:H7).